A 254-amino-acid chain; its full sequence is Phosphoribosylaminoimidazole-succinocarboxamide synthase (254 aa).

It belongs to the SAICAR synthetase family.

The enzyme catalyses 5-amino-1-(5-phospho-D-ribosyl)imidazole-4-carboxylate + L-aspartate + ATP = (2S)-2-[5-amino-1-(5-phospho-beta-D-ribosyl)imidazole-4-carboxamido]succinate + ADP + phosphate + 2 H(+). It functions in the pathway purine metabolism; IMP biosynthesis via de novo pathway; 5-amino-1-(5-phospho-D-ribosyl)imidazole-4-carboxamide from 5-amino-1-(5-phospho-D-ribosyl)imidazole-4-carboxylate: step 1/2. This is Phosphoribosylaminoimidazole-succinocarboxamide synthase from Rhodospirillum centenum (strain ATCC 51521 / SW).